The following is a 376-amino-acid chain: Homeobox protein extradenticle (376 aa).

The interval 16-35 is disordered; sequence APQGYSLSGQDDGQNTGNEN. The segment covering 20-34 has biased composition (polar residues); that stretch reads YSLSGQDDGQNTGNE. One can recognise a PBC domain in the interval 38 to 237; that stretch reads RKQKDIGEIL…VMILRSRFLD (200 aa). Positions 45–124 are PBC-A; sequence EILQQIMSIS…EGVAGPEKGG (80 aa). The interval 127–237 is PBC-B; it reads AAAASAAAAS…VMILRSRFLD (111 aa). Residues 238 to 300 constitute a DNA-binding region (homeobox; TALE-type); sequence ARRKRRNFSK…NKRIRYKKNI (63 aa). The span at 318 to 335 shows a compositional bias: low complexity; it reads ASPYSMAGPPSGTTTPMM. Residues 318–376 are disordered; sequence ASPYSMAGPPSGTTTPMMSPAPPQDSMGYTMGSGGYDQQQPYDNSMGGYDPNLHQDLSP.

It belongs to the TALE/PBX homeobox family. Interacts with Ubx and hth.

It is found in the nucleus. Transcription factor which acts with the selector homeodomain proteins altering the regulation of downstream target genes such as wingless (wg), teashirt (tsh) and decapentaplegic (dpp), thus affecting segmental identity. Delimits the eye field and prevent inappropriate eye development. Required for proper localization of chordotonal organs within the peripheral nervous system. This is Homeobox protein extradenticle from Drosophila pseudoobscura pseudoobscura (Fruit fly).